Consider the following 603-residue polypeptide: Protein SHORT-ROOT 2 (603 aa).

Disordered regions lie at residues 11-58 and 106-140; these read HHHH…HSHS and DFSSSSSSRQFHSGTGAPSSAPVPPPPSATTSSAG. Positions 31 to 44 are enriched in low complexity; that stretch reads SYPSSRGSTSSPSS. Residues 45–58 are compositionally biased toward basic residues; the sequence is HHTHNHTYYHHSHS. Residues 108–125 are compositionally biased toward low complexity; the sequence is SSSSSSRQFHSGTGAPSS. Positions 179–602 constitute a GRAS domain; the sequence is AAPSSSGRWA…QPVVWASAWK (424 aa). Positions 186-249 are leucine repeat I (LRI); that stretch reads RWAAQLLMEC…LTTSGPRTLR (64 aa). Residues 268–354 form a VHIID region; sequence ALKFQELSPW…DTPHLSITTV (87 aa). The short motif at 318 to 322 is the VHIID element; sequence LHILD. Residues 370 to 406 are leucine repeat II (LRII); the sequence is EIGQRLEKFARLMGVPFSFRAVHHSGDLADLDLAALD. A PFYRE region spans residues 416–514; sequence LAVNCVNALR…ERAVGRAIVD (99 aa). The tract at residues 517–602 is SAW; sequence SCPASQSAER…QPVVWASAWK (86 aa).

It belongs to the GRAS family. In terms of assembly, does not interact with SCR1.

Its subcellular location is the nucleus. In terms of biological role, putative transcription factor involved in asymmetric cell division. This chain is Protein SHORT-ROOT 2 (SHR2), found in Oryza sativa subsp. japonica (Rice).